The primary structure comprises 252 residues: MAPSEFSDAQQPPQHRTVQPPGVAYVPTEEERSVFRECNEESFWYRSLPISAVSMIVTQGLVSRGFLTTSSRFGSLPKVAFAGICGYLAGKVSYMKTCQEKFKRLENSPLGEALRQGYRKLPTQYPAGTSEFSDINPTTPSAPGGFASNMVEPPSSVYSSQYGSTSDSVPFSTSLGESSPSGISDNIAPEPAALIEDAPTRKPMTYDELRNRNRETYEMAVTQRSDSPVRSSQDRASRKEAKTNKYGDVLED.

2 disordered regions span residues Met-1 to Pro-21 and Pro-126 to Asp-252. Residues Met-1–Glu-112 enclose the OCIA domain. 2 stretches are compositionally biased toward polar residues: residues Ser-7 to Thr-17 and Pro-126 to Ser-141. The span at Ser-155–Val-169 shows a compositional bias: low complexity. Residues Pro-170–Ser-184 show a composition bias toward polar residues. Over residues Ala-198–Tyr-217 the composition is skewed to basic and acidic residues. Residues Thr-222 to Ser-231 show a composition bias toward polar residues. The span at Ser-232 to Lys-245 shows a compositional bias: basic and acidic residues.

This sequence belongs to the OCIAD1 family.

The protein resides in the endosome. The chain is OCIA domain-containing protein 1 (ociad1) from Xenopus laevis (African clawed frog).